Here is a 119-residue protein sequence, read N- to C-terminus: UPF0145 protein Bcep18194_B0595 (119 aa).

This sequence belongs to the UPF0145 family.

This Burkholderia lata (strain ATCC 17760 / DSM 23089 / LMG 22485 / NCIMB 9086 / R18194 / 383) protein is UPF0145 protein Bcep18194_B0595.